The chain runs to 557 residues: TBCC domain-containing protein 1 (557 aa).

Positions 290–435 constitute a C-CAP/cofactor C-like domain; that stretch reads TTKRAKIACN…LEDHMARTGL (146 aa).

It belongs to the TBCC family.

It localises to the cytoplasm. The protein resides in the cytoskeleton. It is found in the microtubule organizing center. The protein localises to the centrosome. Its subcellular location is the spindle pole. Functionally, plays a role in the regulation of centrosome and Golgi apparatus positioning, with consequences on cell shape and cell migration. The sequence is that of TBCC domain-containing protein 1 (TBCCD1) from Homo sapiens (Human).